The chain runs to 413 residues: MKIYLVGGAVRDQLLNIPIKDRDYMVVGATVQEMLDKGYRQVGKDFPVFLHPKTQQEYALARTERKTGVGYGGFSVYAAPDVTLEEDLLRRDLTINAIAQDETGRVFDPYGGQADIEQRLLRHVSDAFVEDPLRVLRVARFAARFQPLGFKVAPETMALMQRIAASGELEALTPERVFQELDKALSTEAPQVFFEVLREAGGLAILFPEIEALFGIPQPEQWHPEIDTGIHTLMVLEQAARLSQDKQVRFAALVHDLGKALSPKEHLPKHHGHGQKGLPLIRALCERFRVPNDYRDLALLVSDQHQNIHNAFELRAETMVKLFDKADLWRKPERLPQLLLACEADCKGRTGLKERPYPQGAYVQHCFELARNVAIKPIIEAGFKGAEIKAQLHKQRVEVIDQYKRKTAVNAKP.

The ATP site is built by Gly8 and Arg11. The CTP site is built by Gly8 and Arg11. Mg(2+) contacts are provided by Asp21 and Asp23. Positions 91, 137, and 140 each coordinate ATP. CTP-binding residues include Arg91, Arg137, and Arg140. Residues 228–329 form the HD domain; sequence TGIHTLMVLE…VKLFDKADLW (102 aa).

This sequence belongs to the tRNA nucleotidyltransferase/poly(A) polymerase family. Bacterial CCA-adding enzyme type 1 subfamily. As to quaternary structure, monomer. Can also form homodimers and oligomers. Mg(2+) is required as a cofactor. Ni(2+) serves as cofactor.

It catalyses the reaction a tRNA precursor + 2 CTP + ATP = a tRNA with a 3' CCA end + 3 diphosphate. It carries out the reaction a tRNA with a 3' CCA end + 2 CTP + ATP = a tRNA with a 3' CCACCA end + 3 diphosphate. Functionally, catalyzes the addition and repair of the essential 3'-terminal CCA sequence in tRNAs without using a nucleic acid template. Adds these three nucleotides in the order of C, C, and A to the tRNA nucleotide-73, using CTP and ATP as substrates and producing inorganic pyrophosphate. tRNA 3'-terminal CCA addition is required both for tRNA processing and repair. Also involved in tRNA surveillance by mediating tandem CCA addition to generate a CCACCA at the 3' terminus of unstable tRNAs. While stable tRNAs receive only 3'-terminal CCA, unstable tRNAs are marked with CCACCA and rapidly degraded. The polypeptide is Multifunctional CCA protein (Shewanella loihica (strain ATCC BAA-1088 / PV-4)).